We begin with the raw amino-acid sequence, 171 residues long: Phosphopantetheine adenylyltransferase (171 aa).

A substrate-binding site is contributed by Thr9. Residues 9–10 (TF) and His17 contribute to the ATP site. The substrate site is built by Lys41, Leu78, and Arg92. ATP is bound by residues 93 to 95 (GLR), Glu103, and 128 to 134 (HQAIASK).

This sequence belongs to the bacterial CoaD family. Homohexamer. Requires Mg(2+) as cofactor.

Its subcellular location is the cytoplasm. It catalyses the reaction (R)-4'-phosphopantetheine + ATP + H(+) = 3'-dephospho-CoA + diphosphate. Its pathway is cofactor biosynthesis; coenzyme A biosynthesis; CoA from (R)-pantothenate: step 4/5. In terms of biological role, reversibly transfers an adenylyl group from ATP to 4'-phosphopantetheine, yielding dephospho-CoA (dPCoA) and pyrophosphate. In Dinoroseobacter shibae (strain DSM 16493 / NCIMB 14021 / DFL 12), this protein is Phosphopantetheine adenylyltransferase.